We begin with the raw amino-acid sequence, 301 residues long: Homoserine O-acetyltransferase (301 aa).

The Acyl-thioester intermediate role is filled by cysteine 142. Substrate-binding residues include lysine 163 and serine 192. Residue histidine 235 is the Proton acceptor of the active site. Residue glutamate 237 is part of the active site. Arginine 249 lines the substrate pocket.

The protein belongs to the MetA family.

The protein localises to the cytoplasm. The catalysed reaction is L-homoserine + acetyl-CoA = O-acetyl-L-homoserine + CoA. It participates in amino-acid biosynthesis; L-methionine biosynthesis via de novo pathway; O-acetyl-L-homoserine from L-homoserine: step 1/1. In terms of biological role, transfers an acetyl group from acetyl-CoA to L-homoserine, forming acetyl-L-homoserine. This Bacillus cereus (strain ATCC 14579 / DSM 31 / CCUG 7414 / JCM 2152 / NBRC 15305 / NCIMB 9373 / NCTC 2599 / NRRL B-3711) protein is Homoserine O-acetyltransferase.